A 1429-amino-acid polypeptide reads, in one-letter code: Autophagy-related protein 11 (1429 aa).

The disordered stretch occupies residues 71-99 (TQRSQPGASSPPLSELPLPRYNAHTPPNS). The segment covering 80–89 (SPPLSELPLP) has biased composition (low complexity). Coiled-coil stretches lie at residues 143 to 173 (VMLR…KEWS), 553 to 590 (DDLL…QTQA), 632 to 815 (LETL…LEDI), and 851 to 989 (EGDM…RLES). The disordered stretch occupies residues 1024-1061 (DGTMHIQRTPRSERSLATTANPNDSDPSSSLRRSSTLN). The span at 1042 to 1061 (TANPNDSDPSSSLRRSSTLN) shows a compositional bias: low complexity. The stretch at 1105–1143 (ADAVYRRVKDVEHMARKLQREARAYREKAHSFQKEAHDK) forms a coiled coil. The segment covering 1209 to 1229 (SKSLQHDQAGETRKDGARGET) has biased composition (basic and acidic residues). Disordered regions lie at residues 1209–1241 (SKSL…DNPF) and 1336–1429 (SSRG…LIGP). A compositionally biased stretch (acidic residues) spans 1230–1239 (ESLDDDENDN). 2 stretches are compositionally biased toward polar residues: residues 1345 to 1372 (ASET…QHMS) and 1383 to 1393 (QETPQQTNSIS).

It belongs to the ATG11 family. Homodimer.

The protein localises to the preautophagosomal structure membrane. Its subcellular location is the vacuole membrane. Functionally, involved in cytoplasm to vacuole transport (Cvt), pexophagy, mitophagy and nucleophagy. Recruits mitochondria for their selective degradation via autophagy (mitophagy) during starvation. Works as scaffold proteins that recruit ATG proteins to the pre-autophagosome (PAS), the site of vesicle/autophagosome formation. Required for the Cvt vesicles completion. The polypeptide is Autophagy-related protein 11 (apg-8) (Neurospora crassa (strain ATCC 24698 / 74-OR23-1A / CBS 708.71 / DSM 1257 / FGSC 987)).